A 433-amino-acid chain; its full sequence is Glutamate-1-semialdehyde 2,1-aminomutase (433 aa).

Lys-270 is modified (N6-(pyridoxal phosphate)lysine).

It belongs to the class-III pyridoxal-phosphate-dependent aminotransferase family. HemL subfamily. As to quaternary structure, homodimer. Requires pyridoxal 5'-phosphate as cofactor.

The protein localises to the cytoplasm. It catalyses the reaction (S)-4-amino-5-oxopentanoate = 5-aminolevulinate. Its pathway is porphyrin-containing compound metabolism; protoporphyrin-IX biosynthesis; 5-aminolevulinate from L-glutamyl-tRNA(Glu): step 2/2. The chain is Glutamate-1-semialdehyde 2,1-aminomutase from Symbiobacterium thermophilum (strain DSM 24528 / JCM 14929 / IAM 14863 / T).